Here is a 103-residue protein sequence, read N- to C-terminus: Large ribosomal subunit protein bL21 (103 aa).

This sequence belongs to the bacterial ribosomal protein bL21 family. In terms of assembly, part of the 50S ribosomal subunit. Contacts protein L20.

Its function is as follows. This protein binds to 23S rRNA in the presence of protein L20. The chain is Large ribosomal subunit protein bL21 from Psychromonas ingrahamii (strain DSM 17664 / CCUG 51855 / 37).